Consider the following 268-residue polypeptide: Hydroxyethylthiazole kinase (268 aa).

A substrate-binding site is contributed by Met45. The ATP site is built by Arg121 and Thr167. Gly194 is a binding site for substrate.

It belongs to the Thz kinase family. Requires Mg(2+) as cofactor.

It carries out the reaction 5-(2-hydroxyethyl)-4-methylthiazole + ATP = 4-methyl-5-(2-phosphooxyethyl)-thiazole + ADP + H(+). The protein operates within cofactor biosynthesis; thiamine diphosphate biosynthesis; 4-methyl-5-(2-phosphoethyl)-thiazole from 5-(2-hydroxyethyl)-4-methylthiazole: step 1/1. In terms of biological role, catalyzes the phosphorylation of the hydroxyl group of 4-methyl-5-beta-hydroxyethylthiazole (THZ). This Bacillus cereus (strain Q1) protein is Hydroxyethylthiazole kinase.